The primary structure comprises 157 residues: Putative pre-16S rRNA nuclease (157 aa).

This sequence belongs to the YqgF nuclease family.

Its subcellular location is the cytoplasm. In terms of biological role, could be a nuclease involved in processing of the 5'-end of pre-16S rRNA. This chain is Putative pre-16S rRNA nuclease, found in Nitrosomonas eutropha (strain DSM 101675 / C91 / Nm57).